The chain runs to 147 residues: Ubiquitin-conjugating enzyme E2 2 (147 aa).

The UBC core domain maps to 1-147 (MALKRIQKEL…AREWTQKYAM (147 aa)). Cys-85 (glycyl thioester intermediate) is an active-site residue.

This sequence belongs to the ubiquitin-conjugating enzyme family. In terms of assembly, interacts with the brc-1-brd-1 heterodimer following ionizing irradiation. As to expression, expressed in the nervous system.

It is found in the nucleus. The protein localises to the chromosome. Its subcellular location is the cytoplasm. The enzyme catalyses S-ubiquitinyl-[E1 ubiquitin-activating enzyme]-L-cysteine + [E2 ubiquitin-conjugating enzyme]-L-cysteine = [E1 ubiquitin-activating enzyme]-L-cysteine + S-ubiquitinyl-[E2 ubiquitin-conjugating enzyme]-L-cysteine.. The protein operates within protein modification; protein ubiquitination. In terms of biological role, catalyzes the covalent attachment of ubiquitin to other proteins. Mediates the selective degradation of short-lived and abnormal proteins. Plays a role in the DNA damage response. In particular, in response to ionizing radiation, associates with the E3 ubiquitin-protein ligase brc-1-brd-1 heterodimer on chromatin to activate E3-ubiquitin ligase activity of the heterodimer, and thus its DNA damage repair mechanisms. Required, cell autonomously, for death of the linker cell, a male-specific cell which guides the elongation of the gonad; perhaps acting as part of the ubiquitin proteasome system (UPS) and modulated by heat shock transcription factor hsf-1. The polypeptide is Ubiquitin-conjugating enzyme E2 2 (Caenorhabditis elegans).